The chain runs to 1331 residues: DNA-directed RNA polymerase subunit beta' (1331 aa).

Residues cysteine 220, cysteine 293, cysteine 300, and cysteine 303 each coordinate Zn(2+). Disordered regions lie at residues 1236–1257 (DFVD…TNDN) and 1294–1331 (ISGD…MKDQ). Polar residues predominate over residues 1243–1257 (SRSPNGYSNVVTNDN).

Belongs to the RNA polymerase beta' chain family. RpoC2 subfamily. As to quaternary structure, in cyanobacteria the RNAP catalytic core is composed of 2 alpha, 1 beta, 1 beta', 1 gamma and 1 omega subunit. When a sigma factor is associated with the core the holoenzyme is formed, which can initiate transcription. Requires Zn(2+) as cofactor.

The catalysed reaction is RNA(n) + a ribonucleoside 5'-triphosphate = RNA(n+1) + diphosphate. DNA-dependent RNA polymerase catalyzes the transcription of DNA into RNA using the four ribonucleoside triphosphates as substrates. The protein is DNA-directed RNA polymerase subunit beta' of Picosynechococcus sp. (strain ATCC 27264 / PCC 7002 / PR-6) (Agmenellum quadruplicatum).